A 547-amino-acid chain; its full sequence is Chaperonin GroEL (547 aa).

ATP-binding positions include 30–33 (TLGP), lysine 51, 87–91 (DGTTT), glycine 415, and aspartate 496. Residues 528–547 (DKSDMPAMPPGGMGGMGGMY) are disordered. A compositionally biased stretch (gly residues) spans 538–547 (GGMGGMGGMY).

It belongs to the chaperonin (HSP60) family. Forms a cylinder of 14 subunits composed of two heptameric rings stacked back-to-back. Interacts with the co-chaperonin GroES.

The protein localises to the cytoplasm. The enzyme catalyses ATP + H2O + a folded polypeptide = ADP + phosphate + an unfolded polypeptide.. Functionally, together with its co-chaperonin GroES, plays an essential role in assisting protein folding. The GroEL-GroES system forms a nano-cage that allows encapsulation of the non-native substrate proteins and provides a physical environment optimized to promote and accelerate protein folding. The protein is Chaperonin GroEL of Chlorobium luteolum (strain DSM 273 / BCRC 81028 / 2530) (Pelodictyon luteolum).